Here is a 962-residue protein sequence, read N- to C-terminus: Glycine dehydrogenase (decarboxylating) (962 aa).

Position 710 is an N6-(pyridoxal phosphate)lysine (Lys-710).

Belongs to the GcvP family. The glycine cleavage system is composed of four proteins: P, T, L and H. Pyridoxal 5'-phosphate is required as a cofactor.

It carries out the reaction N(6)-[(R)-lipoyl]-L-lysyl-[glycine-cleavage complex H protein] + glycine + H(+) = N(6)-[(R)-S(8)-aminomethyldihydrolipoyl]-L-lysyl-[glycine-cleavage complex H protein] + CO2. Functionally, the glycine cleavage system catalyzes the degradation of glycine. The P protein binds the alpha-amino group of glycine through its pyridoxal phosphate cofactor; CO(2) is released and the remaining methylamine moiety is then transferred to the lipoamide cofactor of the H protein. The protein is Glycine dehydrogenase (decarboxylating) of Idiomarina loihiensis (strain ATCC BAA-735 / DSM 15497 / L2-TR).